The primary structure comprises 398 residues: CCA-adding enzyme (398 aa).

ATP contacts are provided by Gly32 and Arg35. CTP is bound by residues Gly32 and Arg35. Mg(2+) is bound by residues Asp45 and Asp47. Positions 116, 159, 162, 165, and 168 each coordinate ATP. Residues Arg116, Asp159, Arg162, Arg165, and Arg168 each contribute to the CTP site.

It belongs to the tRNA nucleotidyltransferase/poly(A) polymerase family. Bacterial CCA-adding enzyme type 3 subfamily. In terms of assembly, homodimer. Mg(2+) is required as a cofactor.

It carries out the reaction a tRNA precursor + 2 CTP + ATP = a tRNA with a 3' CCA end + 3 diphosphate. The enzyme catalyses a tRNA with a 3' CCA end + 2 CTP + ATP = a tRNA with a 3' CCACCA end + 3 diphosphate. Functionally, catalyzes the addition and repair of the essential 3'-terminal CCA sequence in tRNAs without using a nucleic acid template. Adds these three nucleotides in the order of C, C, and A to the tRNA nucleotide-73, using CTP and ATP as substrates and producing inorganic pyrophosphate. tRNA 3'-terminal CCA addition is required both for tRNA processing and repair. Also involved in tRNA surveillance by mediating tandem CCA addition to generate a CCACCA at the 3' terminus of unstable tRNAs. While stable tRNAs receive only 3'-terminal CCA, unstable tRNAs are marked with CCACCA and rapidly degraded. This Lacticaseibacillus paracasei (strain ATCC 334 / BCRC 17002 / CCUG 31169 / CIP 107868 / KCTC 3260 / NRRL B-441) (Lactobacillus paracasei) protein is CCA-adding enzyme.